We begin with the raw amino-acid sequence, 250 residues long: V-type proton ATPase subunit D (250 aa).

The protein belongs to the V-ATPase D subunit family. V-ATPase is a heteromultimeric enzyme made up of two complexes: the ATP-hydrolytic V1 complex and the proton translocation V0 complex. The V1 complex consists of three catalytic AB heterodimers that form a heterohexamer, three peripheral stalks each consisting of EG heterodimers, one central rotor including subunits D and F, and the regulatory subunits C and H. The proton translocation complex V0 consists of the proton transport subunit a, a ring of proteolipid subunits c9c'', rotary subunit d, subunits e and f, and two accessory subunits ATP6AP1/Ac45 and ATP6AP2/PRR.

In terms of biological role, subunit of the V1 complex of vacuolar(H+)-ATPase (V-ATPase), a multisubunit enzyme composed of a peripheral complex (V1) that hydrolyzes ATP and a membrane integral complex (V0) that translocates protons. V-ATPase is responsible for acidifying and maintaining the pH of intracellular compartments and in some cell types, is targeted to the plasma membrane, where it is responsible for acidifying the extracellular environment. The protein is V-type proton ATPase subunit D (VATPD) of Suberites domuncula (Sponge).